A 401-amino-acid polypeptide reads, in one-letter code: Argininosuccinate synthase (401 aa).

A8–S16 provides a ligand contact to ATP. An L-citrulline-binding site is contributed by Y87. G117 serves as a coordination point for ATP. 3 residues coordinate L-aspartate: T119, N123, and D124. An L-citrulline-binding site is contributed by N123. L-citrulline-binding residues include R127, S175, E259, and Y271.

This sequence belongs to the argininosuccinate synthase family. Type 1 subfamily. As to quaternary structure, homotetramer.

The protein resides in the cytoplasm. It carries out the reaction L-citrulline + L-aspartate + ATP = 2-(N(omega)-L-arginino)succinate + AMP + diphosphate + H(+). Its pathway is amino-acid biosynthesis; L-arginine biosynthesis; L-arginine from L-ornithine and carbamoyl phosphate: step 2/3. This chain is Argininosuccinate synthase, found in Corynebacterium efficiens (strain DSM 44549 / YS-314 / AJ 12310 / JCM 11189 / NBRC 100395).